Consider the following 47-residue polypeptide: Turripeptide Ici9.1 (47 aa).

3 disulfide bridges follow: cysteine 1/cysteine 31, cysteine 5/cysteine 24, and cysteine 13/cysteine 45. A Kazal-like domain is found at 1–47 (CLSVCSMEYWPVCGSDGKTYPNECHLTSEACMSNTDITVAHVGKCDQ).

This sequence belongs to the conopeptide P-like superfamily. As to expression, expressed by the venom duct.

It localises to the secreted. In terms of biological role, acts as a neurotoxin by inhibiting an ion channel. May also act as a serine protease inhibitor, since it possess the kazal serine protease inhibitor signature. The protein is Turripeptide Ici9.1 of Iotyrris cingulifera (Sea snail).